Consider the following 652-residue polypeptide: Set1 complex component ash2 (652 aa).

Residues 1–32 (MLAHGSNDYGVSLKGNKTGSSPSKASSLNWNE) form a disordered region. Positions 15–32 (GNKTGSSPSKASSLNWNE) are enriched in polar residues. The segment at 40 to 94 (NTYCYCGKDRNLRFPDLQCSVCLNMFHLSCLSPPCTSMMGFSTNYQFVCKHCTED) adopts a PHD-type zinc-finger fold. Residues Cys43, Cys45, Cys58, Cys61, His66, Cys69, Cys88, and Cys91 each contribute to the Zn(2+) site. Positions 234 to 270 (RLVETETPPPSSSKLKEDYKDSKREMKRSNTPWSNAS) are disordered. Positions 247–261 (KLKEDYKDSKREMKR) are enriched in basic and acidic residues. Residues 330-519 (EAAKDLPNVM…KHNRYIDLPY (190 aa)) enclose the B30.2/SPRY domain.

The protein belongs to the cclA family. Component of the Set1 complex composed of ash2, sdc1, set1, shg1, spp1, swd1, swd2 and swd3. Component of the Lid2 complex composed of ash2, jmj3, lid2, sdc1 and snt2.

The protein resides in the nucleus. In terms of biological role, component of the COMPASS (Set1C) complex that specifically mono-, di- and trimethylates histone H3 to form H3K4me1/2/3, which subsequently plays a role in telomere length maintenance and transcription elongation regulation. Regulates MAPK pathway and sporulation through H3K4 methylation. In Schizosaccharomyces pombe (strain 972 / ATCC 24843) (Fission yeast), this protein is Set1 complex component ash2.